Here is a 478-residue protein sequence, read N- to C-terminus: Probable sodium/glutamine symporter GlnT (478 aa).

The next 10 helical transmembrane spans lie at 14-34, 85-105, 145-165, 185-205, 211-231, 236-256, 298-318, 342-362, 381-401, and 411-431; these read DLLWSKLLIVLLLSFGIYFTF, IAIAIALGGPGAIFWMWIIAI, WMGALFAVLITLSFGIVFNSV, LGLILIAVFGTIIFGGVKRIA, IVVVLAVLYIGVAFFVIFSNI, GVLALIVKNAFGFDQAAGGAL, AFGVLTDTLVICTSTAFIILF, GSWASGFLAILILLFGFCALI, LIFVYRIGVLAMIVFGCVAKV, and FMGLMVIVNLIAIFLLSKVVF.

It belongs to the alanine or glycine:cation symporter (AGCS) (TC 2.A.25) family.

The protein localises to the cell membrane. Its function is as follows. Probably functions as a sodium/glutamine symporter for glutamine uptake. The polypeptide is Probable sodium/glutamine symporter GlnT (glnT) (Bacillus subtilis (strain 168)).